We begin with the raw amino-acid sequence, 161 residues long: Nucleotide-binding protein Mmc1_1670 (161 aa).

This sequence belongs to the YajQ family.

Functionally, nucleotide-binding protein. The chain is Nucleotide-binding protein Mmc1_1670 from Magnetococcus marinus (strain ATCC BAA-1437 / JCM 17883 / MC-1).